The chain runs to 1035 residues: Unconventional myosin IC (1035 aa).

The Myosin motor domain maps to 21 to 703; it reads GVQDFVLLEN…TLFDTEDAYQ (683 aa). Residue 114–121 coordinates ATP; that stretch reads GESGSGKT. Serine 304 carries the phosphoserine modification. Threonine 310 carries the phosphothreonine modification. The interval 578-600 is actin-binding; sequence LNNLMDILMCKEPSYIRCIKPND. 3 consecutive IQ domains span residues 696-728, 729-751, and 752-779; these read FDTE…KYLK, LRAQ…AAKK, and RREA…FNEE. The TH1 domain maps to 857 to 1035; it reads KNNYASSVST…KGHLVIIGTQ (179 aa).

The protein belongs to the TRAFAC class myosin-kinesin ATPase superfamily. Myosin family. Binds F-actin. As to expression, in the embryo, expressed in gastric caeca, midgut cells of the proventriculus, and in the mid and hindgut. In the larval and adult gut brush border, expressed in the microvilli. Also expressed at high levels in follicle cells during oogenesis.

It is found in the cytoplasm. The protein resides in the cell cortex. It localises to the cell membrane. Unconventional myosin that functions as actin-based motor protein with ATPase activity. Binds to membranes enriched in phosphatidylinositol 4-5-bisphosphate, and can glide along actin filaments when anchored to a lipid bilayer. Functions as antagonist for Myo31DF, an unconventional myosin with an essential role in the establishment of body left-right asymmetry. The protein is Unconventional myosin IC (Myo61F) of Drosophila melanogaster (Fruit fly).